The chain runs to 601 residues: UBA domain-containing protein 3 (601 aa).

The 123-residue stretch at 7–129 (ETAIRELVQS…LFLDENHSTN (123 aa)) folds into the Arf-GAP domain. 2 disordered regions span residues 123-158 (DENH…KSRY) and 289-310 (EPNQ…SSMG). Residues 139–156 (TKSSSQSSPMASTSTSKS) are compositionally biased toward low complexity. The 41-residue stretch at 157-197 (RYADSLSTLHDMGFSDDSVNTHALEETNGDVTRAIEKIVQH) folds into the UBA domain.

The polypeptide is UBA domain-containing protein 3 (ucp3) (Schizosaccharomyces pombe (strain 972 / ATCC 24843) (Fission yeast)).